Reading from the N-terminus, the 328-residue chain is Porphobilinogen deaminase (328 aa).

Cys-250 is modified (S-(dipyrrolylmethanemethyl)cysteine).

This sequence belongs to the HMBS family. In terms of assembly, monomer. The cofactor is dipyrromethane.

The catalysed reaction is 4 porphobilinogen + H2O = hydroxymethylbilane + 4 NH4(+). It functions in the pathway porphyrin-containing compound metabolism; protoporphyrin-IX biosynthesis; coproporphyrinogen-III from 5-aminolevulinate: step 2/4. In terms of biological role, tetrapolymerization of the monopyrrole PBG into the hydroxymethylbilane pre-uroporphyrinogen in several discrete steps. The polypeptide is Porphobilinogen deaminase (Burkholderia ambifaria (strain ATCC BAA-244 / DSM 16087 / CCUG 44356 / LMG 19182 / AMMD) (Burkholderia cepacia (strain AMMD))).